The following is a 188-amino-acid chain: MGIDINHKYDRKVRRTEPKSQDVYLRLLVKLYRFLQRRTNKKFNRIILKRLFMSKINRPPLSLQRIARFFKAANQPESTIVVVGTVTDDARLLVVPKLTVCALHVTQTARERILKAGGEVLTFDQLALRSPTGKNTLLLQGRRTARTACKHFGKAPGVPHSHTRPYVRSKGRKFERARGRRSSCGYKK.

Belongs to the eukaryotic ribosomal protein eL18 family.

It localises to the cytoplasm. The protein is Large ribosomal subunit protein eL18 (RpL18) of Drosophila melanogaster (Fruit fly).